A 700-amino-acid polypeptide reads, in one-letter code: Putative glutamine-dependent NAD(+) synthetase (700 aa).

Residues 5 to 275 (VTIASCQLNQ…VEVISATVDV (271 aa)) form the CN hydrolase domain. The active-site Proton acceptor; for glutaminase activity is the E45. K114 serves as the catalytic For glutaminase activity. Catalysis depends on C175, which acts as the Nucleophile; for glutaminase activity. The tract at residues 327–700 (IPLPEEEITF…ASKFEQHQRK (374 aa)) is ligase. Residue 357-364 (PLSGGLDS) coordinates ATP. S359 is a catalytic residue.

It in the C-terminal section; belongs to the NAD synthetase family.

It catalyses the reaction deamido-NAD(+) + L-glutamine + ATP + H2O = L-glutamate + AMP + diphosphate + NAD(+) + H(+). It functions in the pathway cofactor biosynthesis; NAD(+) biosynthesis; NAD(+) from deamido-NAD(+) (L-Gln route): step 1/1. The protein is Putative glutamine-dependent NAD(+) synthetase of Schizosaccharomyces pombe (strain 972 / ATCC 24843) (Fission yeast).